A 377-amino-acid chain; its full sequence is Hsc70-interacting protein 2 (377 aa).

The interval Ala-68–Val-123 is disordered. Ser-80 is modified (phosphoserine). Residues Pro-89–Ser-105 show a composition bias toward acidic residues. TPR repeat units follow at residues Ala-126–Asn-159, Leu-161–Leu-193, and Ala-195–Glu-227. Positions Asn-239–His-276 form a coiled coil. Residues Ile-243–Asn-277 are compositionally biased toward basic and acidic residues. 2 disordered regions span residues Ile-243 to Gly-302 and Asp-344 to Asp-377. A compositionally biased stretch (gly residues) spans Gly-282–Gly-293. In terms of domain architecture, STI1 spans Asn-294–Ile-336. Residues Lys-355 to Ala-369 show a composition bias toward basic and acidic residues.

This sequence belongs to the FAM10 family. As to quaternary structure, homotetramer. Interacts with Hsc70 as well as DNAJ homologs and Hsp90.

It is found in the cytoplasm. Its function is as follows. One HIP oligomer binds the ATPase domains of at least two Hsc70 molecules dependent on activation of the Hsc70 ATPase by Hsp40. Stabilizes the ADP state of Hsc70 that has a high affinity for substrate protein. Through its own chaperone activity, it may contribute to the interaction of Hsc70 with various target proteins. In Drosophila melanogaster (Fruit fly), this protein is Hsc70-interacting protein 2.